Here is a 132-residue protein sequence, read N- to C-terminus: Small ribosomal subunit protein uS9 (132 aa).

Positions 101-132 are disordered; it reads KRAGLLTRDPRMKERKKPGLKAARRSPQFSKR. Residues 113–132 show a composition bias toward basic residues; that stretch reads KERKKPGLKAARRSPQFSKR.

It belongs to the universal ribosomal protein uS9 family.

This is Small ribosomal subunit protein uS9 from Staphylococcus aureus (strain USA300).